Here is a 476-residue protein sequence, read N- to C-terminus: Glycogen synthase (476 aa).

Lysine 15 contacts ADP-alpha-D-glucose.

This sequence belongs to the glycosyltransferase 1 family. Bacterial/plant glycogen synthase subfamily.

It carries out the reaction [(1-&gt;4)-alpha-D-glucosyl](n) + ADP-alpha-D-glucose = [(1-&gt;4)-alpha-D-glucosyl](n+1) + ADP + H(+). It functions in the pathway glycan biosynthesis; glycogen biosynthesis. Its function is as follows. Synthesizes alpha-1,4-glucan chains using ADP-glucose. The chain is Glycogen synthase from Ligilactobacillus salivarius (strain UCC118) (Lactobacillus salivarius).